A 146-amino-acid chain; its full sequence is uncharacterized protein (146 aa).

2 helical membrane-spanning segments follow: residues 89 to 111 (AIEM…LLLY) and 121 to 143 (IGCG…YSVV).

It localises to the cell membrane. This is an uncharacterized protein from Archaeoglobus fulgidus (strain ATCC 49558 / DSM 4304 / JCM 9628 / NBRC 100126 / VC-16).